The following is a 374-amino-acid chain: Chaperone protein DnaJ (374 aa).

Residues 5–71 (DLYAILGVCR…QKRASYDRFG (67 aa)) form the J domain. The CR-type zinc finger occupies 132 to 210 (GVEKQIRIAT…CQGTGRVKDT (79 aa)). Zn(2+)-binding residues include Cys-145, Cys-148, Cys-162, Cys-165, Cys-184, Cys-187, Cys-198, and Cys-201. CXXCXGXG motif repeat units lie at residues 145-152 (CGECHGSG), 162-169 (CPTCNGAG), 184-191 (CPTCHGRG), and 198-205 (CNKCQGTG).

It belongs to the DnaJ family. In terms of assembly, homodimer. The cofactor is Zn(2+).

Its subcellular location is the cytoplasm. Functionally, participates actively in the response to hyperosmotic and heat shock by preventing the aggregation of stress-denatured proteins and by disaggregating proteins, also in an autonomous, DnaK-independent fashion. Unfolded proteins bind initially to DnaJ; upon interaction with the DnaJ-bound protein, DnaK hydrolyzes its bound ATP, resulting in the formation of a stable complex. GrpE releases ADP from DnaK; ATP binding to DnaK triggers the release of the substrate protein, thus completing the reaction cycle. Several rounds of ATP-dependent interactions between DnaJ, DnaK and GrpE are required for fully efficient folding. Also involved, together with DnaK and GrpE, in the DNA replication of plasmids through activation of initiation proteins. This is Chaperone protein DnaJ from Dichelobacter nodosus (strain VCS1703A).